We begin with the raw amino-acid sequence, 228 residues long: UPF0758 protein CTC_02075 (228 aa).

Residues 106–228 (NITNPKDAAY…YISLKEKDIL (123 aa)) form the MPN domain. 3 residues coordinate Zn(2+): histidine 177, histidine 179, and aspartate 190. Positions 177-190 (HNHPSGDTTPSKED) match the JAMM motif motif.

The protein belongs to the UPF0758 family.

In Clostridium tetani (strain Massachusetts / E88), this protein is UPF0758 protein CTC_02075.